The chain runs to 155 residues: Large ribosomal subunit protein uL22c (155 aa).

The protein belongs to the universal ribosomal protein uL22 family. In terms of assembly, part of the 50S ribosomal subunit.

The protein resides in the plastid. It is found in the chloroplast. Functionally, this protein binds specifically to 23S rRNA. The globular domain of the protein is located near the polypeptide exit tunnel on the outside of the subunit, while an extended beta-hairpin is found that lines the wall of the exit tunnel in the center of the 70S ribosome. This is Large ribosomal subunit protein uL22c (rpl22) from Coffea arabica (Arabian coffee).